Consider the following 176-residue polypeptide: Insulin-like growth factor 1 (176 aa).

A b region spans residues 45 to 73; the sequence is GPETLCGAELVDTLQFVCGERGFYFSKPT. 3 disulfides stabilise this stretch: C50–C92, C62–C105, and C91–C96. Residues 74-85 form a c region; it reads GYGPSSRRSHNR. Residues 86 to 106 form an a region; that stretch reads GIVDECCFQSCELRRLEMYCA. A d region spans residues 107 to 114; sequence PVKSGKAA. The propeptide at 115 to 176 is e peptide; that stretch reads RSVRAQRHTD…GNTGGRNYRM (62 aa). The disordered stretch occupies residues 115–176; that stretch reads RSVRAQRHTD…GNTGGRNYRM (62 aa). Residues 140–161 show a composition bias toward basic and acidic residues; sequence RGTERRTAQHPDKTKPKKEVHQ.

It belongs to the insulin family.

It is found in the secreted. Its function is as follows. The insulin-like growth factors, isolated from plasma, are structurally and functionally related to insulin but have a much higher growth-promoting activity. Acts as a ligand for IGF1R. Binds to the alpha subunit of IGF1R, leading to the activation of the intrinsic tyrosine kinase activity which autophosphorylates tyrosine residues in the beta subunit thus initiatiating a cascade of down-stream signaling events leading to activation of the PI3K-AKT/PKB and the Ras-MAPK pathways. Binds to integrins. Its binding to integrins and subsequent ternary complex formation with integrins and IGFR1 are essential for IGF1 signaling. The protein is Insulin-like growth factor 1 of Oncorhynchus mykiss (Rainbow trout).